The sequence spans 616 residues: Chaperone protein HscA homolog (616 aa).

It belongs to the heat shock protein 70 family.

Chaperone involved in the maturation of iron-sulfur cluster-containing proteins. Has a low intrinsic ATPase activity which is markedly stimulated by HscB. The polypeptide is Chaperone protein HscA homolog (Vibrio cholerae serotype O1 (strain M66-2)).